Reading from the N-terminus, the 55-residue chain is Large ribosomal subunit protein bL33 (55 aa).

It belongs to the bacterial ribosomal protein bL33 family.

The polypeptide is Large ribosomal subunit protein bL33 (Cereibacter sphaeroides (strain ATCC 17029 / ATH 2.4.9) (Rhodobacter sphaeroides)).